A 211-amino-acid polypeptide reads, in one-letter code: MTEIQKLTNNKEIIAYLAEKFPLCFSLEGEAKPLKIGLFQDLAEALANDEKVSKTQLRQALRQYTSNWRYLHGCRAGAVRVDLNGEPAGILEQEHVEHAAAKLAEAKAKVAERRAVEKANNPKANKKRSVYHSGNKSENKKSAGKKFSKPRQVEQIFVNVDLANLQKGDVVRVKAGDKTTKAEILEVVKEGARVELENGLILTVSADRLFA.

The interval 113–147 is disordered; sequence RRAVEKANNPKANKKRSVYHSGNKSENKKSAGKKF.

This sequence belongs to the ProQ family.

It localises to the cytoplasm. Its function is as follows. RNA chaperone with significant RNA binding, RNA strand exchange and RNA duplexing activities. This chain is RNA chaperone ProQ, found in Histophilus somni (strain 129Pt) (Haemophilus somnus).